The following is a 353-amino-acid chain: MNRSVVLILLLNIIVSVVIVLSSHSWFSVCDGLELNTLSVLPILCGQFSPRGVESTIKYFLVQAFSAAMILNVALVQLWLCSSWSVSCPLNSFSSIVLTLALCLKLGLFPCHFWFPDVLQGLSFLQGLLLSTWQKVAPFIILVSVCNIISINVLTTLGCLSVLVGGWGGLNQSQVRKIMAFSSISHLGWICSVLSYSIYVGCIMFVVYIVLSSTVFLINNEGNLYNLSSLARLVYCNNVMGNVLVLVILSLGGLPPLTGFLNKFIALECLLSNNLLVPCAILIVGSLLSLFFYLRISFNSVLCLFPQHSMMLFSWRNVSGYYGNTSFYTVLLSILSSMSILGLLLVPALWSYH.

The next 8 helical transmembrane spans lie at 4–24, 60–80, 96–116, 139–159, 198–218, 241–261, 274–294, and 330–350; these read SVVL…LSSH, FLVQ…QLWL, IVLT…FWFP, FIIL…TLGC, IYVG…VFLI, GNVL…TGFL, NLLV…FFYL, and VLLS…PALW.

This sequence belongs to the complex I subunit 2 family.

Its subcellular location is the mitochondrion inner membrane. It carries out the reaction a ubiquinone + NADH + 5 H(+)(in) = a ubiquinol + NAD(+) + 4 H(+)(out). In terms of biological role, core subunit of the mitochondrial membrane respiratory chain NADH dehydrogenase (Complex I) that is believed to belong to the minimal assembly required for catalysis. Complex I functions in the transfer of electrons from NADH to the respiratory chain. The immediate electron acceptor for the enzyme is believed to be ubiquinone. The polypeptide is NADH-ubiquinone oxidoreductase chain 2 (ND2) (Pisaster ochraceus (Ochre sea star)).